We begin with the raw amino-acid sequence, 608 residues long: Tectonic-3 (608 aa).

The signal sequence occupies residues 1–22 (MRTPQLALLQVFLLMFPDGVRP). Residues 23 to 58 (QPSSSPSGAVPTSLDLQPGTVGGTLQSSSEATATRP) are disordered. The Extracellular portion of the chain corresponds to 23–586 (QPSSSPSGAV…AFSRGVSSQK (564 aa)). Residues 45-54 (GTLQSSSEAT) show a composition bias toward polar residues. 3 N-linked (GlcNAc...) asparagine glycosylation sites follow: asparagine 78, asparagine 179, and asparagine 347. The chain crosses the membrane as a helical span at residues 587–607 (CSVSPVLILCLLLLGVLNLET). A topological domain (cytoplasmic) is located at residue threonine 608.

Belongs to the tectonic family. In terms of assembly, part of the tectonic-like complex (also named B9 complex).

The protein localises to the membrane. Part of the tectonic-like complex which is required for tissue-specific ciliogenesis and may regulate ciliary membrane composition. May be involved in apoptosis regulation. Necessary for signal transduction through the sonic hedgehog (Shh) signaling pathway. The chain is Tectonic-3 (TCTN3) from Macaca fascicularis (Crab-eating macaque).